The following is a 688-amino-acid chain: Elongation factor G (688 aa).

The tr-type G domain occupies 8-282 (DKFRNFGIMA…GVVDYLPSPL (275 aa)). GTP is bound by residues 17–24 (AHIDAGKT), 81–85 (DTPGH), and 135–138 (NKMD).

Belongs to the TRAFAC class translation factor GTPase superfamily. Classic translation factor GTPase family. EF-G/EF-2 subfamily.

It localises to the cytoplasm. Catalyzes the GTP-dependent ribosomal translocation step during translation elongation. During this step, the ribosome changes from the pre-translocational (PRE) to the post-translocational (POST) state as the newly formed A-site-bound peptidyl-tRNA and P-site-bound deacylated tRNA move to the P and E sites, respectively. Catalyzes the coordinated movement of the two tRNA molecules, the mRNA and conformational changes in the ribosome. The sequence is that of Elongation factor G from Clostridium beijerinckii (strain ATCC 51743 / NCIMB 8052) (Clostridium acetobutylicum).